Here is a 266-residue protein sequence, read N- to C-terminus: 3-methyl-2-oxobutanoate hydroxymethyltransferase 2 (266 aa).

Mg(2+) is bound by residues D45 and D84. Residues 45-46, D84, and K112 contribute to the 3-methyl-2-oxobutanoate site; that span reads DS. Residue E114 participates in Mg(2+) binding. E181 functions as the Proton acceptor in the catalytic mechanism.

The protein belongs to the PanB family. In terms of assembly, homodecamer; pentamer of dimers. Requires Mg(2+) as cofactor.

Its subcellular location is the cytoplasm. It carries out the reaction 3-methyl-2-oxobutanoate + (6R)-5,10-methylene-5,6,7,8-tetrahydrofolate + H2O = 2-dehydropantoate + (6S)-5,6,7,8-tetrahydrofolate. It participates in cofactor biosynthesis; (R)-pantothenate biosynthesis; (R)-pantoate from 3-methyl-2-oxobutanoate: step 1/2. In terms of biological role, catalyzes the reversible reaction in which hydroxymethyl group from 5,10-methylenetetrahydrofolate is transferred onto alpha-ketoisovalerate to form ketopantoate. The chain is 3-methyl-2-oxobutanoate hydroxymethyltransferase 2 from Pseudomonas aeruginosa (strain ATCC 15692 / DSM 22644 / CIP 104116 / JCM 14847 / LMG 12228 / 1C / PRS 101 / PAO1).